Reading from the N-terminus, the 999-residue chain is Sarcoplasmic/endoplasmic reticulum calcium ATPase 3 (999 aa).

An N-acetylmethionine modification is found at Met-1. The Cytoplasmic segment spans residues 1 to 48 (MEEAHLLSAADVLRRFSVTAEGGLSLEQVTDARERYGPNELPTEEGKS). Position 17 is a phosphoserine (Ser-17). Thr-19 is modified (phosphothreonine). The residue at position 25 (Ser-25) is a Phosphoserine. The chain crosses the membrane as a helical span at residues 49–69 (LWELVVEQFEDLLVRILLLAA). The Lumenal segment spans residues 70–89 (LVSFVLAWFEEGEETTTAFV). Residues 90 to 110 (EPLVIMLILVANAIVGVWQER) traverse the membrane as a helical segment. The Cytoplasmic portion of the chain corresponds to 111–253 (NAESAIEALK…PERTPLQRKL (143 aa)). The chain crosses the membrane as a helical span at residues 254 to 273 (DEFGRQLSHAISVICVAVWV). The Lumenal portion of the chain corresponds to 274–295 (INIGHFADPAHGGSWLRGAVYY). The helical transmembrane segment at 296 to 313 (FKIAVALAVAAIPEGLPA) threads the bilayer. Ca(2+) is bound by residues Val-304, Ala-305, Ile-307, and Glu-309. The Cytoplasmic segment spans residues 314 to 757 (VITTCLALGT…EEGRAIYNNM (444 aa)). Catalysis depends on Asp-351, which acts as the 4-aspartylphosphate intermediate. The Mg(2+) site is built by Asp-351 and Thr-353. Position 353 (Thr-353) interacts with ATP. Positions 370–400 (AEAEAGTCRLHEFTISGTTYTPEGEVRQGEQ) are interaction with phospholamban 1. Position 415 is a phosphothreonine (Thr-415). ATP contacts are provided by Glu-442, Arg-489, Lys-515, Arg-560, Thr-625, Gly-626, and Asp-627. Ser-662 bears the Phosphoserine mark. ATP is bound by residues Arg-678 and Lys-684. A Mg(2+)-binding site is contributed by Asp-703. Position 706 (Asn-706) interacts with ATP. Residues 758–777 (KQFIRYLISSNVGEVVCIFL) form a helical membrane-spanning segment. Ca(2+)-binding residues include Asn-768 and Glu-771. The Lumenal portion of the chain corresponds to 778–787 (TAILGLPEAL). A helical transmembrane segment spans residues 788–808 (IPVQLLWVNLVTDGLPATALG). The interaction with phospholamban 2 stretch occupies residues 788 to 808 (IPVQLLWVNLVTDGLPATALG). Ca(2+) is bound by residues Asn-796, Thr-799, and Asp-800. Residues 809–828 (FNPPDLDIMEKPPRNPREAL) are Cytoplasmic-facing. Residues 829–851 (ISGWLFFRYLAIGVYVGLATVAA) form a helical membrane-spanning segment. The Lumenal portion of the chain corresponds to 852 to 897 (ATWWFLYDTEGPQVTFYQLRNFLKCSEDNPLFAGIDCKVFESRFPT). A helical transmembrane segment spans residues 898 to 917 (TMALSVLVTIEMCNALNSVS). Residue Glu-908 participates in Ca(2+) binding. The Cytoplasmic portion of the chain corresponds to 918–930 (ENQSLLRMPPWLN). Residues 931 to 949 (PWLLGAVVMSMALHFLILL) traverse the membrane as a helical segment. Over 950–964 (VPPLPLIFQVTPLSG) the chain is Lumenal. Residues 965-985 (RQWGVVLQMSLPVILLDEALK) form a helical membrane-spanning segment. Residues 986 to 999 (YLSRNHMDEKKDLK) lie on the Cytoplasmic side of the membrane.

The protein belongs to the cation transport ATPase (P-type) (TC 3.A.3) family. Type IIA subfamily. In terms of assembly, interacts with sarcolipin (SLN). Interacts with phospholamban (PLN). Interacts with myoregulin (MRLN). Interacts with DWORF. Interacts with VMP1. Interacts with TUNAR; the interaction occurs at low levels in low glucose conditions and is increased by high glucose levels. Mg(2+) is required as a cofactor.

The protein localises to the endoplasmic reticulum membrane. It is found in the sarcoplasmic reticulum membrane. The enzyme catalyses Ca(2+)(in) + ATP + H2O = Ca(2+)(out) + ADP + phosphate + H(+). Its activity is regulated as follows. Inhibited by sarcolipin (SLN), phospholamban (PLN) and myoregulin (MRLN). Enhanced by DWORF; DWORF increases activity by displacing sarcolipin (SLN), phospholamban (PLN) and myoregulin (MRLN). Functionally, this magnesium-dependent enzyme catalyzes the hydrolysis of ATP coupled with the transport of calcium. Transports calcium ions from the cytosol into the sarcoplasmic/endoplasmic reticulum lumen. Contributes to calcium sequestration involved in muscular excitation/contraction. The protein is Sarcoplasmic/endoplasmic reticulum calcium ATPase 3 (Atp2a3) of Mus musculus (Mouse).